We begin with the raw amino-acid sequence, 96 residues long: uncharacterized protein (96 aa).

Positions 1–28 (MNKKAIVGIFMSILMAGLVGCAGSSDAQ) are cleaved as a signal peptide.

This is an uncharacterized protein from Butyrivibrio fibrisolvens.